The primary structure comprises 232 residues: Thiamine import ATP-binding protein ThiQ (232 aa).

In terms of domain architecture, ABC transporter spans Leu-2 to Ile-230. Gly-32–Ser-39 serves as a coordination point for ATP.

This sequence belongs to the ABC transporter superfamily. Thiamine importer (TC 3.A.1.19.1) family. The complex is composed of two ATP-binding proteins (ThiQ), two transmembrane proteins (ThiP) and a solute-binding protein (ThiB).

The protein localises to the cell inner membrane. It catalyses the reaction thiamine(out) + ATP + H2O = thiamine(in) + ADP + phosphate + H(+). Its function is as follows. Part of the ABC transporter complex ThiBPQ involved in thiamine import. Responsible for energy coupling to the transport system. The sequence is that of Thiamine import ATP-binding protein ThiQ from Shigella flexneri.